The chain runs to 388 residues: S-adenosylmethionine synthase (388 aa).

His16 is an ATP binding site. Position 18 (Asp18) interacts with Mg(2+). Glu44 serves as a coordination point for K(+). Residues Glu57 and Gln100 each coordinate L-methionine. The interval 100 to 110 (QSPDIAQGVDK) is flexible loop. ATP contacts are provided by residues 167–169 (DAK), 233–234 (RF), Asp242, 248–249 (RK), Ala265, and Lys269. Residue Asp242 coordinates L-methionine. An L-methionine-binding site is contributed by Lys273.

It belongs to the AdoMet synthase family. As to quaternary structure, homotetramer; dimer of dimers. Requires Mg(2+) as cofactor. K(+) serves as cofactor.

Its subcellular location is the cytoplasm. It carries out the reaction L-methionine + ATP + H2O = S-adenosyl-L-methionine + phosphate + diphosphate. It participates in amino-acid biosynthesis; S-adenosyl-L-methionine biosynthesis; S-adenosyl-L-methionine from L-methionine: step 1/1. Its function is as follows. Catalyzes the formation of S-adenosylmethionine (AdoMet) from methionine and ATP. The overall synthetic reaction is composed of two sequential steps, AdoMet formation and the subsequent tripolyphosphate hydrolysis which occurs prior to release of AdoMet from the enzyme. This chain is S-adenosylmethionine synthase, found in Polynucleobacter necessarius subsp. necessarius (strain STIR1).